Reading from the N-terminus, the 463-residue chain is Phytase A (463 aa).

The first 19 residues, 1–19 (MAFFTVALSLYYLLSRVST), serve as a signal peptide directing secretion. Residue N26 is glycosylated (N-linked (GlcNAc...) asparagine). Residues C29 and C38 are joined by a disulfide bond. N41 carries N-linked (GlcNAc...) asparagine glycosylation. Residues Q48, Y49, R79, H80, R83, and T86 each coordinate 1D-myo-inositol hexakisphosphate. 4 cysteine pairs are disulfide-bonded: C69–C410, C211–C460, C260–C278, and C431–C439. The active-site Nucleophile is the H80. 2 N-linked (GlcNAc...) asparagine glycosylation sites follow: N103 and N118. R163 contributes to the 1D-myo-inositol hexakisphosphate binding site. An N-linked (GlcNAc...) asparagine glycan is attached at N203. A 1D-myo-inositol hexakisphosphate-binding site is contributed by D207. N226 is a glycosylation site (N-linked (GlcNAc...) asparagine). K297 serves as a coordination point for 1D-myo-inositol hexakisphosphate. N-linked (GlcNAc...) asparagine glycosylation is found at N331 and N335. The 1D-myo-inositol hexakisphosphate site is built by H357 and D358. The N-linked (GlcNAc...) asparagine glycan is linked to N372.

This sequence belongs to the histidine acid phosphatase family. As to quaternary structure, monomer. Post-translationally, seems to be cleaved into at least two pieces, most likely due to proteases in the supernatant. The N-terminal fragment, called phyB seems to retain phytase activity.

The protein localises to the secreted. The catalysed reaction is 1D-myo-inositol hexakisphosphate + H2O = 1D-myo-inositol 1,2,4,5,6-pentakisphosphate + phosphate. It carries out the reaction 1D-myo-inositol 1,2,4,5,6-pentakisphosphate + H2O = 1D-myo-inositol 1,2,5,6-tetrakisphosphate + phosphate. It catalyses the reaction 1D-myo-inositol 1,2,5,6-tetrakisphosphate + H2O = 1D-myo-inositol 1,2,6-trisphosphate + phosphate. The enzyme catalyses 1D-myo-inositol 1,2,6-trisphosphate + H2O = 1D-myo-inositol 1,2-bisphosphate + phosphate. The catalysed reaction is 1D-myo-inositol 1,2-bisphosphate + H2O = 1D-myo-inositol 2-phosphate + phosphate. Catalyzes the phosphate monoester hydrolysis of phytic acid (myo-inositol hexakisphosphate), which results in the stepwise formation of myo-inositol pentakis-, tetrakis-, tris-, bis-, and monophosphates, as well as the liberation of inorganic phosphate. Myo-inositol 2-monophosphate is the end product. Has a broad substrate specificity and is also able to dephosphorylate other classic acid phosphatase substrates such as p-nitrophenyl phosphate, phenyl phosphate, fructose 1,6-bisphosphate, fructose 6-phosphate, glucose 6-phosphate, ribose 5-phosphate, alpha-glycerophosphate, beta-glycerophosphate, 3-phosphoglycerate, as well as ADP and ATP. This is Phytase A from Emericella nidulans (strain FGSC A4 / ATCC 38163 / CBS 112.46 / NRRL 194 / M139) (Aspergillus nidulans).